A 302-amino-acid chain; its full sequence is Glutaminase (302 aa).

Positions 61, 111, 155, 162, 186, 238, and 256 each coordinate substrate.

This sequence belongs to the glutaminase family. In terms of assembly, homotetramer.

The enzyme catalyses L-glutamine + H2O = L-glutamate + NH4(+). The sequence is that of Glutaminase from Pseudomonas fluorescens (strain Pf0-1).